Consider the following 366-residue polypeptide: ADP-ribosylarginine hydrolase Tri1 (366 aa).

An N-terminal extension region spans residues 1–65 (MIDLREDTWT…LNTPPCLIPE (65 aa)). The ADP-ribosyl hydrolase domain stretch occupies residues 74–366 (GALVGLAIGD…LFYMAPEEDF (293 aa)). The Mg(2+) site is built by Thr-116, Asp-117, Asp-118, Asp-161, and Asp-317.

The protein belongs to the ADP-ribosylglycohydrolase family. Forms a stable complex with cognate effector protein Tre1-Sp. Requires Mg(2+) as cofactor.

The enzyme catalyses N(omega)-(ADP-D-ribosyl)-L-arginyl-[protein] + H2O = ADP-D-ribose + L-arginyl-[protein]. Functionally, immunity component of a contact-dependent interbacterial competition system (also called effector-immunity systems). Acts as an arginine mono-ADP-ribosylhydrolase, mediating the removal of mono-ADP-ribose attached to arginine residues on proteins. De-ADP-ribosylates FtsZ, is able to act on other proteins as well. Neutralizes the toxic activity of cognate toxin Tre1-Sp. Expression of this protein alone in E.coli partially protects the cells against competition by wild-type S.proteamaculans. Neutralizes Tre1-Sp both by occluding its active site via its N-terminal extension and by hydrolyzing the ADP-ribosyl moiety from FtsZ; the 2 activities are dissociable by mutagenesis. The protein is ADP-ribosylarginine hydrolase Tri1 of Serratia proteamaculans (strain 568).